A 182-amino-acid chain; its full sequence is Large ribosomal subunit protein bL17m (182 aa).

This sequence belongs to the bacterial ribosomal protein bL17 family.

Its subcellular location is the mitochondrion. This chain is Large ribosomal subunit protein bL17m (mrpl17), found in Dictyostelium discoideum (Social amoeba).